Here is a 301-residue protein sequence, read N- to C-terminus: Pantothenate synthetase (301 aa).

30–37 is an ATP binding site; it reads MGNLHEGH. The Proton donor role is filled by His37. Gln61 serves as a coordination point for (R)-pantoate. Gln61 contacts beta-alanine. 149–152 is an ATP binding site; it reads GEKD. Position 155 (Gln155) interacts with (R)-pantoate. ATP-binding positions include Val178 and 186-189; that span reads MSSR.

Belongs to the pantothenate synthetase family. In terms of assembly, homodimer.

The protein localises to the cytoplasm. The catalysed reaction is (R)-pantoate + beta-alanine + ATP = (R)-pantothenate + AMP + diphosphate + H(+). Its pathway is cofactor biosynthesis; (R)-pantothenate biosynthesis; (R)-pantothenate from (R)-pantoate and beta-alanine: step 1/1. Functionally, catalyzes the condensation of pantoate with beta-alanine in an ATP-dependent reaction via a pantoyl-adenylate intermediate. The polypeptide is Pantothenate synthetase (Vibrio vulnificus (strain CMCP6)).